Reading from the N-terminus, the 473-residue chain is BPI fold-containing family B member 3 (473 aa).

A signal peptide spans 1 to 20; the sequence is MMPGVYALLLLWGLATPCLG. Asn139 is a glycosylation site (N-linked (GlcNAc...) asparagine). The cysteines at positions 161 and 196 are disulfide-linked.

Belongs to the BPI/LBP/Plunc superfamily. BPI/LBP family. As to expression, highly expressed in olfactory mucosa but undetectable in thymus, kidney, lung, brain, spleen and liver.

The protein resides in the secreted. Its function is as follows. May have the capacity to recognize and bind specific classes of odorants. May act as a carrier molecule, transporting odorants across the mucus layer to access receptor sites. May serve as a primary defense mechanism by recognizing and removing potentially harmful odorants or pathogenic microorganisms from the mucosa or clearing excess odorant from mucus to enable new odorant stimuli to be received. The sequence is that of BPI fold-containing family B member 3 from Rattus norvegicus (Rat).